Consider the following 748-residue polypeptide: Formate acetyltransferase (748 aa).

The region spanning 5 to 618 (NNHTNAWQGF…KTGNTPDGRK (614 aa)) is the PFL domain. The active-site S-acetylcysteine intermediate is the Cys-412. The active-site Cysteine radical intermediate is the Cys-413. The region spanning 625–748 (PGANPMHGRD…VISRTFHESM (124 aa)) is the Glycine radical domain. Gly-723 carries the post-translational modification Glycine radical.

This sequence belongs to the glycyl radical enzyme (GRE) family. PFL subfamily. Homodimer.

It is found in the cytoplasm. The catalysed reaction is formate + acetyl-CoA = pyruvate + CoA. It participates in fermentation; pyruvate fermentation; formate from pyruvate: step 1/1. Catalyzes the conversion of pyruvate to formate and acetyl-CoA. This chain is Formate acetyltransferase (pflB), found in Staphylococcus epidermidis (strain ATCC 12228 / FDA PCI 1200).